Consider the following 36-residue polypeptide: GDCHKFLGWCRGEKDPCCEHLTCHVKHGWCVWDGTI.

3 disulfide bridges follow: C3/C18, C10/C23, and C17/C30. At I36 the chain carries Isoleucine amide.

The protein belongs to the neurotoxin 10 (Hwtx-1) family. Expressed by the venom gland.

The protein resides in the secreted. Selective inhibitor of voltage-gated potassium channel Kv10.1/KCNH1/EAG1 (IC(50)=637 nM). It acts by shifting the voltage dependence of channel activation in a depolarising direction. It shows a 100% inhibition at saturating concentrations, shows fast on-rates and is reversible. It also slightly affects channel inactivation, when the membrane is highly depolarised (&gt;+80 mV). The chain is Kappa-theraphotoxin-Aa1a from Avicularia aurantiaca (Yellow-banded pinktoe tarantula).